A 371-amino-acid chain; its full sequence is MSVVERIWWGHRAAPGEAVLLAPLLLAEGLFRAGAAARGALYDSGLLAQARAGVPVISIGNVAVGGAGKTPAAIAVSARLAARGRRVAVLSRGYGASRRDARVVSDGAHVLLGAGEAGDEPALLARRLPGVAVLCGPRRAALAATAVTTLGADALVLDDGFQHRALARDLDVVVLDAANPFGNGHLLPRGPNREPRAALRRAGLVWLSRVDQADEVALEALRALALEATGRAPVESRHAPVDVVDGTLARSLGREALRGARVLALSGLARPGAFRRTLADLGAEVVGERAFPDHHRFTDRELDEALRAAEAAGARAVTTEKDAVRLAPARAADPRLCAVRIDAELVRGEDHLAQSLDAALARGDVLSRSAG.

ATP is bound at residue A63–T70.

Belongs to the LpxK family.

The catalysed reaction is a lipid A disaccharide + ATP = a lipid IVA + ADP + H(+). The protein operates within glycolipid biosynthesis; lipid IV(A) biosynthesis; lipid IV(A) from (3R)-3-hydroxytetradecanoyl-[acyl-carrier-protein] and UDP-N-acetyl-alpha-D-glucosamine: step 6/6. Its function is as follows. Transfers the gamma-phosphate of ATP to the 4'-position of a tetraacyldisaccharide 1-phosphate intermediate (termed DS-1-P) to form tetraacyldisaccharide 1,4'-bis-phosphate (lipid IVA). This Anaeromyxobacter sp. (strain Fw109-5) protein is Tetraacyldisaccharide 4'-kinase.